Reading from the N-terminus, the 120-residue chain is Chaperonin GroEL (120 aa).

23–27 contacts ATP; it reads DGTTT.

Belongs to the chaperonin (HSP60) family. In terms of assembly, forms a cylinder of 14 subunits composed of two heptameric rings stacked back-to-back. Interacts with the co-chaperonin GroES.

The protein resides in the cytoplasm. The catalysed reaction is ATP + H2O + a folded polypeptide = ADP + phosphate + an unfolded polypeptide.. Functionally, together with its co-chaperonin GroES, plays an essential role in assisting protein folding. The GroEL-GroES system forms a nano-cage that allows encapsulation of the non-native substrate proteins and provides a physical environment optimized to promote and accelerate protein folding. The sequence is that of Chaperonin GroEL from Mycobacterium intracellulare.